Reading from the N-terminus, the 356-residue chain is Histidinol-phosphate aminotransferase (356 aa).

At Lys214 the chain carries N6-(pyridoxal phosphate)lysine.

It belongs to the class-II pyridoxal-phosphate-dependent aminotransferase family. Histidinol-phosphate aminotransferase subfamily. Homodimer. It depends on pyridoxal 5'-phosphate as a cofactor.

It catalyses the reaction L-histidinol phosphate + 2-oxoglutarate = 3-(imidazol-4-yl)-2-oxopropyl phosphate + L-glutamate. The protein operates within amino-acid biosynthesis; L-histidine biosynthesis; L-histidine from 5-phospho-alpha-D-ribose 1-diphosphate: step 7/9. The sequence is that of Histidinol-phosphate aminotransferase from Escherichia coli (strain SMS-3-5 / SECEC).